The chain runs to 93 residues: Parbolysin P4 (93 aa).

Cystine bridges form between cysteine 16/cysteine 37, cysteine 22/cysteine 33, and cysteine 47/cysteine 60.

Belongs to the worm cytolysin family. Localized within the skin and proboscis and are most readily isolated from body mucus secretions.

The protein localises to the secreted. Its function is as follows. Cytolysin that shows hemolytic activity (on bovine erythrocytes, HC(50)=5.75 mg/ml). This hemolytic activity is completely inhibited by small unilamelar vesicles composed of PC/PG, PC/PI and PC/PS in 1:1 molar ratios (with at least 100 mg/ml concentration). This chain is Parbolysin P4, found in Parborlasia corrugatus (Antarctic nemertean worm).